Reading from the N-terminus, the 197-residue chain is Small ribosomal subunit protein uS4B (197 aa).

The S4 RNA-binding domain maps to 88 to 151 (CRLDNIAYRI…RKNDEFADNF (64 aa)).

This sequence belongs to the universal ribosomal protein uS4 family. As to quaternary structure, part of the 30S ribosomal subunit. Contacts protein S5. The interaction surface between S4 and S5 is involved in control of translational fidelity.

Its function is as follows. One of the primary rRNA binding proteins, it binds directly to 16S rRNA where it nucleates assembly of the body of the 30S subunit. In terms of biological role, with S5 and S12 plays an important role in translational accuracy. This Clostridium botulinum (strain Langeland / NCTC 10281 / Type F) protein is Small ribosomal subunit protein uS4B.